Reading from the N-terminus, the 90-residue chain is Putative cytochrome c oxidase subunit 5b-like (90 aa).

Positions 43, 67, and 70 each coordinate Zn(2+).

Belongs to the cytochrome c oxidase subunit 5B (TC 3.D.4.11) family.

In Arabidopsis thaliana (Mouse-ear cress), this protein is Putative cytochrome c oxidase subunit 5b-like.